A 124-amino-acid polypeptide reads, in one-letter code: S-adenosylmethionine decarboxylase proenzyme (124 aa).

Residue S70 is the Schiff-base intermediate with substrate; via pyruvic acid of the active site. A Pyruvic acid (Ser); by autocatalysis modification is found at S70. H75 serves as the catalytic Proton acceptor; for processing activity. C90 (proton donor; for catalytic activity) is an active-site residue.

The protein belongs to the prokaryotic AdoMetDC family. Type 1 subfamily. As to quaternary structure, heterotetramer of two alpha and two beta chains arranged as a dimer of alpha/beta heterodimers. Pyruvate serves as cofactor. Post-translationally, is synthesized initially as an inactive proenzyme. Formation of the active enzyme involves a self-maturation process in which the active site pyruvoyl group is generated from an internal serine residue via an autocatalytic post-translational modification. Two non-identical subunits are generated from the proenzyme in this reaction, and the pyruvate is formed at the N-terminus of the alpha chain, which is derived from the carboxyl end of the proenzyme. The post-translation cleavage follows an unusual pathway, termed non-hydrolytic serinolysis, in which the side chain hydroxyl group of the serine supplies its oxygen atom to form the C-terminus of the beta chain, while the remainder of the serine residue undergoes an oxidative deamination to produce ammonia and the pyruvoyl group blocking the N-terminus of the alpha chain.

It catalyses the reaction S-adenosyl-L-methionine + H(+) = S-adenosyl 3-(methylsulfanyl)propylamine + CO2. Its pathway is amine and polyamine biosynthesis; S-adenosylmethioninamine biosynthesis; S-adenosylmethioninamine from S-adenosyl-L-methionine: step 1/1. Its function is as follows. Catalyzes the decarboxylation of S-adenosylmethionine to S-adenosylmethioninamine (dcAdoMet), the propylamine donor required for the synthesis of the polyamines spermine and spermidine from the diamine putrescine. The chain is S-adenosylmethionine decarboxylase proenzyme from Pyrobaculum neutrophilum (strain DSM 2338 / JCM 9278 / NBRC 100436 / V24Sta) (Thermoproteus neutrophilus).